A 338-amino-acid chain; its full sequence is tRNA dimethylallyltransferase (338 aa).

13–20 is a binding site for ATP; the sequence is GPTASGKT. A substrate-binding site is contributed by 15-20; the sequence is TASGKT. Interaction with substrate tRNA stretches follow at residues 38-41 and 162-166; these read DSTL and QRVSR.

Belongs to the IPP transferase family. Monomer. Requires Mg(2+) as cofactor.

It carries out the reaction adenosine(37) in tRNA + dimethylallyl diphosphate = N(6)-dimethylallyladenosine(37) in tRNA + diphosphate. Catalyzes the transfer of a dimethylallyl group onto the adenine at position 37 in tRNAs that read codons beginning with uridine, leading to the formation of N6-(dimethylallyl)adenosine (i(6)A). This chain is tRNA dimethylallyltransferase, found in Cellvibrio japonicus (strain Ueda107) (Pseudomonas fluorescens subsp. cellulosa).